Here is a 400-residue protein sequence, read N- to C-terminus: Apolipoprotein N-acyltransferase (400 aa).

The next 5 membrane-spanning stretches (helical) occupy residues 16-36 (AISPLLVSLLGLFSIASVLFV), 42-62 (FGVGFFIGMLWFYWISLGLRY), 67-87 (FLIPLVVIACGIFMGFVFYIG), 97-117 (FAFLLLLSYLTPFGFDWIVPE), and 123-143 (SYIGVDKLSFALSILALWILF). Residues 181–400 (AQSAVSQDFD…AIITPFVSSR (220 aa)) form the CN hydrolase domain. Glu222 functions as the Proton acceptor in the catalytic mechanism. Residue Lys283 is part of the active site. Cys332 serves as the catalytic Nucleophile. The chain crosses the membrane as a helical span at residues 377 to 397 (YGSVIFHATNLSPAAIITPFV).

The protein belongs to the CN hydrolase family. Apolipoprotein N-acyltransferase subfamily.

The protein localises to the cell inner membrane. It carries out the reaction N-terminal S-1,2-diacyl-sn-glyceryl-L-cysteinyl-[lipoprotein] + a glycerophospholipid = N-acyl-S-1,2-diacyl-sn-glyceryl-L-cysteinyl-[lipoprotein] + a 2-acyl-sn-glycero-3-phospholipid + H(+). Its pathway is protein modification; lipoprotein biosynthesis (N-acyl transfer). In terms of biological role, catalyzes the phospholipid dependent N-acylation of the N-terminal cysteine of apolipoprotein, the last step in lipoprotein maturation. The chain is Apolipoprotein N-acyltransferase from Helicobacter hepaticus (strain ATCC 51449 / 3B1).